Reading from the N-terminus, the 732-residue chain is Polyribonucleotide nucleotidyltransferase (732 aa).

Positions 515 and 521 each coordinate Mg(2+). The region spanning 581–641 (PKLELFNVDP…KNVDAAKDYI (61 aa)) is the KH domain. In terms of domain architecture, S1 motif spans 672–731 (GDEFTGSVKSVVDFGVFIELKDGVDGLLHISKIKSPLNVGDQVKVCVSEQKGNKISLSLV).

It belongs to the polyribonucleotide nucleotidyltransferase family. The cofactor is Mg(2+).

It is found in the cytoplasm. The enzyme catalyses RNA(n+1) + phosphate = RNA(n) + a ribonucleoside 5'-diphosphate. In terms of biological role, involved in mRNA degradation. Catalyzes the phosphorolysis of single-stranded polyribonucleotides processively in the 3'- to 5'-direction. In Campylobacter concisus (strain 13826), this protein is Polyribonucleotide nucleotidyltransferase.